The following is a 164-amino-acid chain: Ubiquitin-conjugating enzyme E2 2 (164 aa).

Residues 4-150 (PARRRLMRDF…VKETVEKSWE (147 aa)) form the UBC core domain. Residue Cys-88 is the Glycyl thioester intermediate of the active site.

Belongs to the ubiquitin-conjugating enzyme family.

It is found in the cytoplasm. Its subcellular location is the nucleus. The enzyme catalyses S-ubiquitinyl-[E1 ubiquitin-activating enzyme]-L-cysteine + [E2 ubiquitin-conjugating enzyme]-L-cysteine = [E1 ubiquitin-activating enzyme]-L-cysteine + S-ubiquitinyl-[E2 ubiquitin-conjugating enzyme]-L-cysteine.. The protein operates within protein modification; protein ubiquitination. Catalyzes the covalent attachment of ubiquitin to other proteins. Plays a role in transcription regulation by catalyzing the monoubiquitination of histone H2B to form H2BK123ub1. H2BK123ub1 gives a specific tag for epigenetic transcriptional activation and is also a prerequisite for H3K4me and H3K79me formation. Also involved in postreplication repair of UV-damaged DNA, in N-end rule-dependent protein degradation and in sporulation. The sequence is that of Ubiquitin-conjugating enzyme E2 2 (UBC2) from Kluyveromyces lactis (strain ATCC 8585 / CBS 2359 / DSM 70799 / NBRC 1267 / NRRL Y-1140 / WM37) (Yeast).